The following is a 134-amino-acid chain: Fluoride-specific ion channel FluC (134 aa).

4 helical membrane-spanning segments follow: residues 7–27 (LAVA…TIMA), 38–58 (GTLL…IVLV), 69–89 (LFLF…AAES), and 110–130 (VGSL…LLGH). Na(+) contacts are provided by Gly77 and Thr80.

The protein belongs to the fluoride channel Fluc/FEX (TC 1.A.43) family.

The protein localises to the cell inner membrane. The catalysed reaction is fluoride(in) = fluoride(out). Its activity is regulated as follows. Na(+) is not transported, but it plays an essential structural role and its presence is essential for fluoride channel function. In terms of biological role, fluoride-specific ion channel. Important for reducing fluoride concentration in the cell, thus reducing its toxicity. This Legionella pneumophila subsp. pneumophila (strain Philadelphia 1 / ATCC 33152 / DSM 7513) protein is Fluoride-specific ion channel FluC.